A 373-amino-acid polypeptide reads, in one-letter code: ADP-forming sulfoacetate-CoA ligase subunit SauC (373 aa).

In terms of domain architecture, ATP-grasp spans Lys-9–Leu-249. Residue Phe-35–Ile-97 participates in ATP binding. Residues Glu-186 and Asn-188 each contribute to the Mg(2+) site.

This sequence belongs to the succinate/malate CoA ligase beta subunit family. Forms a complex with SauD. Requires Mg(2+) as cofactor.

It catalyses the reaction sulfoacetate + ATP + CoA = sulfoacetyl-CoA + ADP + phosphate. Its function is as follows. Involved in the degradation of sulfoacetate. Catalyzes the CoA- and ATP-dependent conversion of sulfoacetate to sulfoacetyl-CoA and ADP. Cannot use other sulfonic and carboxylic acids, and shows only residual activity with 3-sulfopropanoate and malonic acid. The protein is ADP-forming sulfoacetate-CoA ligase subunit SauC of Bilophila wadsworthia (strain 3_1_6).